Reading from the N-terminus, the 419-residue chain is Protein-lysine N-methyltransferase EFM2 (419 aa).

S-adenosyl-L-methionine is bound by residues Trp222, 261 to 263 (GAG), Asp290, Trp318, and Ala340.

This sequence belongs to the class I-like SAM-binding methyltransferase superfamily. METTL21 family.

It is found in the cytoplasm. In terms of biological role, S-adenosyl-L-methionine-dependent protein-lysine N-methyltransferase that mono- and dimethylates elongation factor 2 (EFT1/EFT2) at 'Lys-613' and methylates elongation factor 3A (YEF3). The sequence is that of Protein-lysine N-methyltransferase EFM2 from Saccharomyces cerevisiae (strain ATCC 204508 / S288c) (Baker's yeast).